Here is a 378-residue protein sequence, read N- to C-terminus: Flagellar P-ring protein 2 (378 aa).

A signal peptide spans 1–33 (MHEVSDKTNAIHPLQRVSRALFALGLLCFAAMA).

It belongs to the FlgI family. In terms of assembly, the basal body constitutes a major portion of the flagellar organelle and consists of four rings (L,P,S, and M) mounted on a central rod.

It localises to the periplasm. It is found in the bacterial flagellum basal body. In terms of biological role, assembles around the rod to form the L-ring and probably protects the motor/basal body from shearing forces during rotation. The chain is Flagellar P-ring protein 2 from Hahella chejuensis (strain KCTC 2396).